We begin with the raw amino-acid sequence, 122 residues long: Large ribosomal subunit protein uL14 (122 aa).

Belongs to the universal ribosomal protein uL14 family. As to quaternary structure, part of the 50S ribosomal subunit. Forms a cluster with proteins L3 and L19. In the 70S ribosome, L14 and L19 interact and together make contacts with the 16S rRNA in bridges B5 and B8.

Binds to 23S rRNA. Forms part of two intersubunit bridges in the 70S ribosome. The polypeptide is Large ribosomal subunit protein uL14 (Helicobacter acinonychis (strain Sheeba)).